A 185-amino-acid chain; its full sequence is MANEIVTTAQERMKHSLASLQRDLGHLRAGRANASLLDRVQVVYYGAPTPLNQLASITIPEARVLMVTPFDKSILKDIEKSLYESDLGITPANDGSVIRLVIPMLTEERRRELVKEMGKYIESAKVAIRNIRRDAMDTAKKSEKAKEITEDDLKDLENEIQKVTDDAVKEADRLASVKEKELLDI.

It belongs to the RRF family.

It localises to the cytoplasm. In terms of biological role, responsible for the release of ribosomes from messenger RNA at the termination of protein biosynthesis. May increase the efficiency of translation by recycling ribosomes from one round of translation to another. In Lactococcus lactis subsp. cremoris (strain SK11), this protein is Ribosome-recycling factor.